A 132-amino-acid chain; its full sequence is Pro-MCH 1 (132 aa).

Positions 1-24 (MRDSVLSVIFALALFLECYTPSMA) are cleaved as a signal peptide. A disulfide bridge links C120 with C129.

This sequence belongs to the MCH family. As to expression, pituitary gland. Produced in neurons of lateral basal hypothalamus which project both to the brain and to the neural lobe of the pituitary gland from where MCH is released.

Its function is as follows. Plays a role in skin pigmentation by antagonizing the action of melanotropin alpha. Induces melanin concentration within the melanophores. May participate in the control of the hypothalamo-pituitary adrenal gland axis by inhibiting the release of ACTH. This is Pro-MCH 1 (mch1) from Oncorhynchus kisutch (Coho salmon).